Consider the following 93-residue polypeptide: Acylphosphatase (93 aa).

The Acylphosphatase-like domain occupies 7–93; that stretch reads CLKAVISGKV…GEFRAFEILR (87 aa). Residues R22 and N40 contribute to the active site.

It belongs to the acylphosphatase family.

The enzyme catalyses an acyl phosphate + H2O = a carboxylate + phosphate + H(+). The protein is Acylphosphatase (acyP) of Acaryochloris marina (strain MBIC 11017).